The sequence spans 224 residues: Claudin-19 (224 aa).

Over 1–7 (MANSGLQ) the chain is Cytoplasmic. The helical transmembrane segment at 8-28 (LLGYFLALGGWVGIIASTALP) threads the bilayer. Topologically, residues 29–81 (QWKQSSYAGDAIITAVGLYEGLWMSCASQSTGQVQCKLYDSLLALDGHIQSAR) are extracellular. Cys-54 and Cys-64 are disulfide-bonded. A helical transmembrane segment spans residues 82-102 (ALMVVAVLLGFVAMVLSVVGM). The Cytoplasmic portion of the chain corresponds to 103 to 117 (KCTRVGDSNPIAKGR). The chain crosses the membrane as a helical span at residues 118-138 (VAIAGGALFILAGLCTLTAVS). The Extracellular portion of the chain corresponds to 139-160 (WYATLVTQEFFNPSTPVNARYE). Residues 161 to 181 (FGPALFVGWASAGLAVLGGSF) form a helical membrane-spanning segment. At 182 to 224 (LCCTCPEPERPNSSPQPYRPGPSAAAREPVVKLPASAKGPLGV) the chain is on the cytoplasmic side. Residues 191-224 (RPNSSPQPYRPGPSAAAREPVVKLPASAKGPLGV) form a disordered region.

The protein belongs to the claudin family. In terms of assembly, can form homo- and heteropolymeric tight junction strands. Interacts with other claudins including CLDN3, CLDN10, CLDN16 and CLDN18 with highest affinity for CLDN16. Interacts (via PDZ-binding motif TRV) with TJP1 (via PDZ domain).

Its subcellular location is the cell junction. It is found in the tight junction. It localises to the cell membrane. It carries out the reaction Mg(2+)(in) = Mg(2+)(out). The catalysed reaction is Ca(2+)(in) = Ca(2+)(out). It catalyses the reaction Na(+)(in) = Na(+)(out). The enzyme catalyses K(+)(in) = K(+)(out). It carries out the reaction Rb(+)(in) = Rb(+)(out). The catalysed reaction is Cs(+)(in) = Cs(+)(out). It catalyses the reaction Li(+)(in) = Li(+)(out). Its function is as follows. Forms paracellular channels: coassembles with CLDN16 into tight junction strands with cation-selective channels through the strands, conveying epithelial permeability in a process known as paracellular tight junction permeability. Involved in the maintenance of ion gradients along the nephron. In the thick ascending limb (TAL) of Henle's loop, facilitates sodium paracellular permeability from the interstitial compartment to the lumen, contributing to the lumen-positive transepithelial potential that drives paracellular magnesium and calcium reabsorption. Forms paracellular barriers on its own. In the peripheral nervous system, represents a major constituent of the tight junctions in Schwann cells and contributes to electrical sealing. During retinal neurogenesis, may regulate the barrier properties of tight junctions in retinal pigment epithelium, required for proper retinal tissue differentiation and vision. This chain is Claudin-19, found in Homo sapiens (Human).